Reading from the N-terminus, the 406-residue chain is Succinylornithine transaminase/acetylornithine aminotransferase (406 aa).

Residues 108–109 (GA) and F141 each bind pyridoxal 5'-phosphate. Residue R144 coordinates N(2)-acetyl-L-ornithine. 226–229 (DEVQ) serves as a coordination point for pyridoxal 5'-phosphate. K255 is subject to N6-(pyridoxal phosphate)lysine. A N(2)-acetyl-L-ornithine-binding site is contributed by T283. T284 serves as a coordination point for pyridoxal 5'-phosphate.

Belongs to the class-III pyridoxal-phosphate-dependent aminotransferase family. ArgD subfamily. Homodimer. Requires pyridoxal 5'-phosphate as cofactor.

It localises to the cytoplasm. The catalysed reaction is N(2)-succinyl-L-ornithine + 2-oxoglutarate = N-succinyl-L-glutamate 5-semialdehyde + L-glutamate. It catalyses the reaction N(2)-acetyl-L-ornithine + 2-oxoglutarate = N-acetyl-L-glutamate 5-semialdehyde + L-glutamate. Its pathway is amino-acid biosynthesis; L-arginine biosynthesis; N(2)-acetyl-L-ornithine from L-glutamate: step 4/4. The protein operates within amino-acid degradation; L-arginine degradation via AST pathway; L-glutamate and succinate from L-arginine: step 3/5. In terms of biological role, transaminates both N(2)-acetylornithine and N(2)-succinylornithine. In Pseudomonas aeruginosa (strain ATCC 15692 / DSM 22644 / CIP 104116 / JCM 14847 / LMG 12228 / 1C / PRS 101 / PAO1), this protein is Succinylornithine transaminase/acetylornithine aminotransferase (aruC).